A 267-amino-acid chain; its full sequence is Undecaprenyl-diphosphatase (267 aa).

8 helical membrane-spanning segments follow: residues 1-21 (MSYF…FLPI), 39-59 (QGLA…VIYF), 83-103 (AKLA…GLLM), 111-131 (LRSA…LWWV), 144-164 (AGWK…IPGT), 189-209 (FLMS…KLVT), 218-238 (TLLT…HFFL), and 246-266 (MTPF…FLMM).

The protein belongs to the UppP family.

It localises to the cell inner membrane. It catalyses the reaction di-trans,octa-cis-undecaprenyl diphosphate + H2O = di-trans,octa-cis-undecaprenyl phosphate + phosphate + H(+). In terms of biological role, catalyzes the dephosphorylation of undecaprenyl diphosphate (UPP). Confers resistance to bacitracin. This is Undecaprenyl-diphosphatase from Vibrio atlanticus (strain LGP32) (Vibrio splendidus (strain Mel32)).